The sequence spans 230 residues: 2,3-bisphosphoglycerate-dependent phosphoglycerate mutase (230 aa).

Substrate contacts are provided by residues 8 to 15 (RHGESEWN), 21 to 22 (TG), Arg60, 87 to 90 (ERHY), Lys98, 114 to 115 (RR), and 183 to 184 (GN). Catalysis depends on His9, which acts as the Tele-phosphohistidine intermediate. The Proton donor/acceptor role is filled by Glu87.

The protein belongs to the phosphoglycerate mutase family. BPG-dependent PGAM subfamily.

It catalyses the reaction (2R)-2-phosphoglycerate = (2R)-3-phosphoglycerate. The protein operates within carbohydrate degradation; glycolysis; pyruvate from D-glyceraldehyde 3-phosphate: step 3/5. Its function is as follows. Catalyzes the interconversion of 2-phosphoglycerate and 3-phosphoglycerate. This is 2,3-bisphosphoglycerate-dependent phosphoglycerate mutase from Streptococcus gordonii (strain Challis / ATCC 35105 / BCRC 15272 / CH1 / DL1 / V288).